A 491-amino-acid polypeptide reads, in one-letter code: AAA-ATPase At2g46620 (491 aa).

A helical transmembrane segment spans residues M1 to V21. Residue G238–S245 participates in ATP binding. A disordered region spans residues G423–A460.

The protein belongs to the AAA ATPase family. BCS1 subfamily. It depends on Mg(2+) as a cofactor.

The protein localises to the membrane. It catalyses the reaction ATP + H2O = ADP + phosphate + H(+). The protein is AAA-ATPase At2g46620 of Arabidopsis thaliana (Mouse-ear cress).